A 132-amino-acid polypeptide reads, in one-letter code: MKAFSPVRSVRKSSLTEHSLGIARSKTPVDDPMSLLYNMNDCYSKLKELVPSIPQNKKVSKMEILQHVIDYILDLQLALDSHPSIVSLHHARVGGSTSRTPLTALNTDISILSLQAAELSAEFTDESKSLCP.

The bHLH domain occupies 23–75 (ARSKTPVDDPMSLLYNMNDCYSKLKELVPSIPQNKKVSKMEILQHVIDYILDL). The Nuclear export signal motif lies at 105-114 (LNTDISILSL).

In terms of assembly, heterodimer with other HLH proteins.

It localises to the cytoplasm. It is found in the nucleus. Functionally, transcriptional regulator (lacking a basic DNA binding domain) which negatively regulates the basic helix-loop-helix (bHLH) transcription factors by forming heterodimers and inhibiting their DNA binding and transcriptional activity. Inhibits the activity of both neurogenic (neurod1/neuroD) and myogenic (myod1/myoD) bHLH factors. May play a role in the regulation of the circadian clock. This is DNA-binding protein inhibitor ID-2 from Xenopus tropicalis (Western clawed frog).